The sequence spans 429 residues: Homocysteine synthase (429 aa).

Position 210 is an N6-(pyridoxal phosphate)lysine (K210).

The protein belongs to the trans-sulfuration enzymes family. Homotetramer. Pyridoxal 5'-phosphate serves as cofactor.

It is found in the cytoplasm. The protein resides in the nucleus. The catalysed reaction is O-acetyl-L-homoserine + methanethiol = L-methionine + acetate + H(+). It carries out the reaction O-acetyl-L-homoserine + hydrogen sulfide = L-homocysteine + acetate. Its pathway is amino-acid biosynthesis; L-methionine biosynthesis via de novo pathway; L-homocysteine from O-acetyl-L-homoserine. Its function is as follows. Catalyzes the conversion of O-acetyl-L-homoserine (OAH) into homocysteine in the methionine biosynthesis pathway. Can also use O-succinyl-L-homoserine and L-homoserine as substrates. Also has cysteine synthase (O-acetylserine sulfhydrylase) activity in vitro, but in S.pombe, it seems only to be involved in the alternative pathway of methionine biosynthesis under cysteine deficiency conditions. This Schizosaccharomyces pombe (strain 972 / ATCC 24843) (Fission yeast) protein is Homocysteine synthase.